The sequence spans 245 residues: DNA polymerase sliding clamp (245 aa).

The protein belongs to the PCNA family. Homotrimer. The subunits circularize to form a toroid; DNA passes through its center. Replication factor C (RFC) is required to load the toroid on the DNA.

Its function is as follows. Sliding clamp subunit that acts as a moving platform for DNA processing. Responsible for tethering the catalytic subunit of DNA polymerase and other proteins to DNA during high-speed replication. This chain is DNA polymerase sliding clamp, found in Methanosarcina mazei (strain ATCC BAA-159 / DSM 3647 / Goe1 / Go1 / JCM 11833 / OCM 88) (Methanosarcina frisia).